Reading from the N-terminus, the 347-residue chain is uncharacterized protein (347 aa).

This is an uncharacterized protein from Saccharomyces cerevisiae (strain ATCC 204508 / S288c) (Baker's yeast).